Here is a 220-residue protein sequence, read N- to C-terminus: Deoxyribose-phosphate aldolase (220 aa).

The Proton donor/acceptor role is filled by D89. Residue K151 is the Schiff-base intermediate with acetaldehyde of the active site. Catalysis depends on K180, which acts as the Proton donor/acceptor.

The protein belongs to the DeoC/FbaB aldolase family. DeoC type 1 subfamily.

The protein resides in the cytoplasm. It catalyses the reaction 2-deoxy-D-ribose 5-phosphate = D-glyceraldehyde 3-phosphate + acetaldehyde. It functions in the pathway carbohydrate degradation; 2-deoxy-D-ribose 1-phosphate degradation; D-glyceraldehyde 3-phosphate and acetaldehyde from 2-deoxy-alpha-D-ribose 1-phosphate: step 2/2. In terms of biological role, catalyzes a reversible aldol reaction between acetaldehyde and D-glyceraldehyde 3-phosphate to generate 2-deoxy-D-ribose 5-phosphate. This is Deoxyribose-phosphate aldolase from Streptococcus sanguinis (strain SK36).